The sequence spans 84 residues: uncharacterized protein (84 aa).

2 helical membrane passes run 7-27 (HVNFQIVVGIPLLIKAVILCI) and 52-72 (ITIIPHSVLYVSLSYYIINPC).

Its subcellular location is the membrane. This is an uncharacterized protein from Saccharomyces cerevisiae (strain ATCC 204508 / S288c) (Baker's yeast).